Reading from the N-terminus, the 311-residue chain is Porphobilinogen deaminase (311 aa).

An S-(dipyrrolylmethanemethyl)cysteine modification is found at cysteine 241.

Belongs to the HMBS family. Monomer. Requires dipyrromethane as cofactor.

The catalysed reaction is 4 porphobilinogen + H2O = hydroxymethylbilane + 4 NH4(+). It participates in porphyrin-containing compound metabolism; protoporphyrin-IX biosynthesis; coproporphyrinogen-III from 5-aminolevulinate: step 2/4. In terms of biological role, tetrapolymerization of the monopyrrole PBG into the hydroxymethylbilane pre-uroporphyrinogen in several discrete steps. In Geobacillus sp. (strain WCH70), this protein is Porphobilinogen deaminase.